The chain runs to 183 residues: ATP synthase subunit delta (183 aa).

It belongs to the ATPase delta chain family. In terms of assembly, F-type ATPases have 2 components, F(1) - the catalytic core - and F(0) - the membrane proton channel. F(1) has five subunits: alpha(3), beta(3), gamma(1), delta(1), epsilon(1). F(0) has three main subunits: a(1), b(2) and c(10-14). The alpha and beta chains form an alternating ring which encloses part of the gamma chain. F(1) is attached to F(0) by a central stalk formed by the gamma and epsilon chains, while a peripheral stalk is formed by the delta and b chains.

It localises to the cell inner membrane. Functionally, f(1)F(0) ATP synthase produces ATP from ADP in the presence of a proton or sodium gradient. F-type ATPases consist of two structural domains, F(1) containing the extramembraneous catalytic core and F(0) containing the membrane proton channel, linked together by a central stalk and a peripheral stalk. During catalysis, ATP synthesis in the catalytic domain of F(1) is coupled via a rotary mechanism of the central stalk subunits to proton translocation. In terms of biological role, this protein is part of the stalk that links CF(0) to CF(1). It either transmits conformational changes from CF(0) to CF(1) or is implicated in proton conduction. The protein is ATP synthase subunit delta of Desulfatibacillum aliphaticivorans.